A 427-amino-acid polypeptide reads, in one-letter code: Adenylosuccinate synthetase (427 aa).

Residues 12–18 (GDEGKGK) and 40–42 (GHT) contribute to the GTP site. The active-site Proton acceptor is the D13. Residues D13 and G40 each coordinate Mg(2+). IMP is bound by residues 13–16 (DEGK), 38–41 (NAGH), T128, R142, Q223, T238, and R302. Residue H41 is the Proton donor of the active site. Position 298-304 (298-304 (TTTGRNR)) interacts with substrate. GTP is bound by residues R304, 330–332 (KLD), and 412–414 (GVG).

It belongs to the adenylosuccinate synthetase family. As to quaternary structure, homodimer. Mg(2+) serves as cofactor.

Its subcellular location is the cytoplasm. The catalysed reaction is IMP + L-aspartate + GTP = N(6)-(1,2-dicarboxyethyl)-AMP + GDP + phosphate + 2 H(+). Its pathway is purine metabolism; AMP biosynthesis via de novo pathway; AMP from IMP: step 1/2. Functionally, plays an important role in the de novo pathway of purine nucleotide biosynthesis. Catalyzes the first committed step in the biosynthesis of AMP from IMP. This chain is Adenylosuccinate synthetase, found in Thermobifida fusca (strain YX).